The following is a 321-amino-acid chain: uncharacterized protein (321 aa).

The interval 280–306 (NSDHINNENNTNSNNDDNSNNSNNNNE) is disordered. Residues 286 to 306 (NENNTNSNNDDNSNNSNNNNE) are compositionally biased toward low complexity.

This is an uncharacterized protein from Dictyostelium discoideum (Social amoeba).